Reading from the N-terminus, the 365-residue chain is Histidinol-phosphate aminotransferase (365 aa).

Residue Lys-222 is modified to N6-(pyridoxal phosphate)lysine.

This sequence belongs to the class-II pyridoxal-phosphate-dependent aminotransferase family. Histidinol-phosphate aminotransferase subfamily. As to quaternary structure, homodimer. It depends on pyridoxal 5'-phosphate as a cofactor.

It catalyses the reaction L-histidinol phosphate + 2-oxoglutarate = 3-(imidazol-4-yl)-2-oxopropyl phosphate + L-glutamate. It functions in the pathway amino-acid biosynthesis; L-histidine biosynthesis; L-histidine from 5-phospho-alpha-D-ribose 1-diphosphate: step 7/9. The chain is Histidinol-phosphate aminotransferase from Geobacillus thermodenitrificans (strain NG80-2).